The chain runs to 712 residues: 1,4-alpha-glucan branching enzyme GlgB (712 aa).

The Nucleophile role is filled by aspartate 397. Glutamate 450 acts as the Proton donor in catalysis.

It belongs to the glycosyl hydrolase 13 family. GlgB subfamily. In terms of assembly, monomer.

The enzyme catalyses Transfers a segment of a (1-&gt;4)-alpha-D-glucan chain to a primary hydroxy group in a similar glucan chain.. Its pathway is glycan biosynthesis; glycogen biosynthesis. Functionally, catalyzes the formation of the alpha-1,6-glucosidic linkages in glycogen by scission of a 1,4-alpha-linked oligosaccharide from growing alpha-1,4-glucan chains and the subsequent attachment of the oligosaccharide to the alpha-1,6 position. The chain is 1,4-alpha-glucan branching enzyme GlgB from Bradyrhizobium sp. (strain ORS 278).